Reading from the N-terminus, the 277-residue chain is Glycerol-3-phosphate acyltransferase (277 aa).

Helical transmembrane passes span 3–23, 55–75, 79–99, 111–131, and 155–175; these read FFIF…AIIV, IMVM…AKLL, PVTV…PVFF, IGAL…TWLL, and LILV…ILVL. A disordered region spans residues 231 to 277; sequence KTEQAEAVKKPKAKKATTKAKKTTSKEETAKKPKSTKPKTKTVKEKE. Basic residues-rich tracts occupy residues 240–253 and 262–271; these read KPKA…AKKT and KPKSTKPKTK.

This sequence belongs to the PlsY family. Probably interacts with PlsX.

Its subcellular location is the cell inner membrane. It catalyses the reaction an acyl phosphate + sn-glycerol 3-phosphate = a 1-acyl-sn-glycero-3-phosphate + phosphate. The protein operates within lipid metabolism; phospholipid metabolism. Catalyzes the transfer of an acyl group from acyl-phosphate (acyl-PO(4)) to glycerol-3-phosphate (G3P) to form lysophosphatidic acid (LPA). This enzyme utilizes acyl-phosphate as fatty acyl donor, but not acyl-CoA or acyl-ACP. The protein is Glycerol-3-phosphate acyltransferase of Legionella pneumophila (strain Lens).